The primary structure comprises 864 residues: Valine--tRNA ligase (864 aa).

Residues 42 to 52 (PTISGKLHIGH) carry the 'HIGH' region motif. The 'KMSKS' region motif lies at 589–593 (KMSKS). Residue lysine 592 coordinates ATP.

It belongs to the class-I aminoacyl-tRNA synthetase family. ValS type 2 subfamily. In terms of assembly, monomer.

The protein localises to the cytoplasm. It carries out the reaction tRNA(Val) + L-valine + ATP = L-valyl-tRNA(Val) + AMP + diphosphate. Functionally, catalyzes the attachment of valine to tRNA(Val). As ValRS can inadvertently accommodate and process structurally similar amino acids such as threonine, to avoid such errors, it has a 'posttransfer' editing activity that hydrolyzes mischarged Thr-tRNA(Val) in a tRNA-dependent manner. The chain is Valine--tRNA ligase from Wolbachia pipientis wMel.